A 413-amino-acid polypeptide reads, in one-letter code: Gamma-lactamase FDB1 (413 aa).

7 residues coordinate Zn(2+): histidine 126, histidine 128, aspartate 130, histidine 131, histidine 211, aspartate 235, and histidine 323.

The protein belongs to the metallo-beta-lactamase superfamily.

It functions in the pathway xenobiotic degradation. Gamma-lactamase; part of the Fusarium detoxification of benzoxazolinone cluster involved in the degradation of benzoxazolinones produced by the host plant. Maize, wheat, and rye produce the 2 benzoxazinone phytoanticipins 2,4-dihy-droxy-7-methoxy-1,4-benzoxazin-3-one (DIMBOA) and 2,4-dihydroxy-1,4-benzoxazin-3-one (DIBOA) that, due to their inherent instability once released, spontaneously degrade to the more stable corresponding benzoxazolinones, 6-methoxy-2-benzoxazolinone (MBOA) and 2-benzoxazolinone (BOA), respectively. The first step in the detoxification of benzoxazolinones involves the hydrolysis of the cyclic ester bond of benzoxazolinones by the gamma-lactamase FDB1 to aminophenols. FDB1 is able to convert BOA into 2-aminophenol (2-AP), as well as MBOA into 5-methoxy-2-aminophenol (2-AMP). The N-malonyltransferase FDB2 then metabolizes aminophenols via N-malonylation to non-toxic malonamic acids. FDB2 converts 2-AP into N-(2-hydroxyphenyl) malonamic acid (HPMA) and 2-AMP into N-(2-hydroxy-4-methoxyphenyl) malonamic acid (HMPMA). The cluster also contains 2 transcription factors (FDB3 and FPSE_08121), an aldo-keto reductase (FPSE_08125) that possibly associates with a ketone component of BOA and MBOA degradation, an esterase (FPSE_08126), an acyl-CoA transferase (FPSE_08120), a solute carrier protein (FPSE_08119) and a transmembrane transporter (FPSE_08127) proposed to shuttle metabolites of benzoxazolinone degradation. The sequence is that of Gamma-lactamase FDB1 from Fusarium pseudograminearum (strain CS3096) (Wheat and barley crown-rot fungus).